We begin with the raw amino-acid sequence, 139 residues long: Large ribosomal subunit protein bL9m (139 aa).

Residues 83 to 121 are disordered; that stretch reads DHQQLSKRHETEVQKNMELRKESVFGHKKEEKPKEEKKG.

It belongs to the bacterial ribosomal protein bL9 family. In terms of assembly, component of the mitochondrial large ribosomal subunit (mt-LSU). Mature yeast 74S mitochondrial ribosomes consist of a small (37S) and a large (54S) subunit. The 37S small subunit contains a 15S ribosomal RNA (15S mt-rRNA) and 34 different proteins. The 54S large subunit contains a 21S rRNA (21S mt-rRNA) and 46 different proteins.

Its subcellular location is the mitochondrion. In terms of biological role, component of the mitochondrial ribosome (mitoribosome), a dedicated translation machinery responsible for the synthesis of mitochondrial genome-encoded proteins, including at least some of the essential transmembrane subunits of the mitochondrial respiratory chain. The mitoribosomes are attached to the mitochondrial inner membrane and translation products are cotranslationally integrated into the membrane. The polypeptide is Large ribosomal subunit protein bL9m (MRPL50) (Saccharomyces cerevisiae (strain ATCC 204508 / S288c) (Baker's yeast)).